We begin with the raw amino-acid sequence, 156 residues long: ATP synthase subunit b (156 aa).

A helical membrane pass occupies residues Val-12–Ala-32.

The protein belongs to the ATPase B chain family. F-type ATPases have 2 components, F(1) - the catalytic core - and F(0) - the membrane proton channel. F(1) has five subunits: alpha(3), beta(3), gamma(1), delta(1), epsilon(1). F(0) has three main subunits: a(1), b(2) and c(10-14). The alpha and beta chains form an alternating ring which encloses part of the gamma chain. F(1) is attached to F(0) by a central stalk formed by the gamma and epsilon chains, while a peripheral stalk is formed by the delta and b chains.

It localises to the cell inner membrane. F(1)F(0) ATP synthase produces ATP from ADP in the presence of a proton or sodium gradient. F-type ATPases consist of two structural domains, F(1) containing the extramembraneous catalytic core and F(0) containing the membrane proton channel, linked together by a central stalk and a peripheral stalk. During catalysis, ATP synthesis in the catalytic domain of F(1) is coupled via a rotary mechanism of the central stalk subunits to proton translocation. In terms of biological role, component of the F(0) channel, it forms part of the peripheral stalk, linking F(1) to F(0). The polypeptide is ATP synthase subunit b (Pseudomonas syringae pv. syringae (strain B728a)).